The primary structure comprises 263 residues: Splicing regulator sde2 (263 aa).

The propeptide at 1–84 (MECKTVFLNG…LTLCTRVLGG (84 aa)) is UBL. 3 disordered regions span residues 95–118 (AGGRMSKKRNEQENQDSCRDLDGN), 137–158 (PAETRAKKEAKKQKLNKVLAAD), and 194–263 (STSA…LYGL). The span at 102–117 (KRNEQENQDSCRDLDG) shows a compositional bias: basic and acidic residues. Composition is skewed to low complexity over residues 194–209 (STSASSFSSGSNGATT) and 219–230 (NNNSSINSWSRR).

It belongs to the SDE2 family. As to quaternary structure, interacts with cay1/cactin. Interacts with prp19. Interacts with cwf12. Interacts with cdc5. The N-terminal UBL (ubiquitin-like) propeptide is cleaved at Gly-84 by the deubiquitinating enzymes ubp5 and ubp15; the resulting mature sde2 associates with spliceosomes. In terms of processing, polyubiquitinated; ubiquitination is partially dependent on ubr11.

The protein localises to the cytoplasm. The protein resides in the nucleus. Its function is as follows. Plays a role in pre-mRNA splicing by facilitating excision of introns featuring relatively long (&gt;21 nucleotides) spacing between the branchpoint and 3'-splice site (ss). Recruits cactin to the spliceosome which may enable folding of RNA between the branchpoint and 3'-ss, to guide the splice site towards the spliceosome's catalytic center. Required for proper chromatin organization by assisting splicing of components involved in genomic stability and telomere organization. The protein is Splicing regulator sde2 of Schizosaccharomyces pombe (strain 972 / ATCC 24843) (Fission yeast).